The primary structure comprises 197 residues: MPAEVHGSPPASLCPCPSVKFRPGLPAMALLTALDDTLPEEAQGPGRRMILLSTPSQSDALRACFERNLYPGIATKEQLAQGIDIPEPRVQIWFQNERSCQLRQHRRQSRPWPGRRDPQKGRRKRTAITGSQTALLLRAFEKDRFPGIPAREELARETGLPESRIQLWFQNRRARHWGQSGRAPTQASIRCNAAPIG.

2 consecutive DNA-binding regions (homeobox) follow at residues 46–105 (GRRM…LRQH) and 121–180 (GRRK…WGQS). The disordered stretch occupies residues 102-127 (LRQHRRQSRPWPGRRDPQKGRRKRTA).

Belongs to the paired homeobox family. In terms of tissue distribution, expressed in hepatoma Hep3B cells.

It localises to the nucleus. This is Putative double homeobox protein 3 (DUX3) from Homo sapiens (Human).